Here is a 1001-residue protein sequence, read N- to C-terminus: E3 ubiquitin-protein ligase etc-1 (1001 aa).

The IQ domain occupies Gln-28 to Asp-57. Residues Leu-66–Arg-115 adopt a coiled-coil conformation. One can recognise an HECT domain in the interval Lys-658–Ala-1001. The active-site Glycyl thioester intermediate is Cys-969.

As to quaternary structure, interacts with ify-1 and cyb-1.

The enzyme catalyses S-ubiquitinyl-[E2 ubiquitin-conjugating enzyme]-L-cysteine + [acceptor protein]-L-lysine = [E2 ubiquitin-conjugating enzyme]-L-cysteine + N(6)-ubiquitinyl-[acceptor protein]-L-lysine.. It participates in protein modification; protein ubiquitination. In terms of biological role, E3 ubiquitin-protein ligase that accepts ubiquitin from E2 ubiquitin-conjugating enzymes, such as ubc-18, in the form of a thioester and then directly transfers the ubiquitin to targeted substrates. Ubiquitinates ify-1 and cyb-1 targeting them for degradation in post-meiotic embryos. This chain is E3 ubiquitin-protein ligase etc-1, found in Caenorhabditis elegans.